We begin with the raw amino-acid sequence, 332 residues long: 5-dehydro-2-deoxygluconokinase (332 aa).

It belongs to the carbohydrate kinase PfkB family.

The catalysed reaction is 5-dehydro-2-deoxy-D-gluconate + ATP = 6-phospho-5-dehydro-2-deoxy-D-gluconate + ADP + H(+). The protein operates within polyol metabolism; myo-inositol degradation into acetyl-CoA; acetyl-CoA from myo-inositol: step 5/7. Functionally, catalyzes the phosphorylation of 5-dehydro-2-deoxy-D-gluconate (2-deoxy-5-keto-D-gluconate or DKG) to 6-phospho-5-dehydro-2-deoxy-D-gluconate (DKGP). This Bacillus thuringiensis subsp. konkukian (strain 97-27) protein is 5-dehydro-2-deoxygluconokinase.